Consider the following 492-residue polypeptide: Membrane-bound glycerophospholipid O-acyltransferase 1 (492 aa).

A run of 6 helical transmembrane segments spans residues 33-53 (VNFV…RIYL), 69-89 (ILGI…LFVL), 125-145 (IYIF…MIVT), 179-199 (PSLL…AGPC), 237-257 (MGAV…FLTL), and 296-316 (YFAW…FNGM). Active-site residues include Asn349 and His380. 3 helical membrane-spanning segments follow: residues 370-390 (VLTF…YFTF), 423-443 (VVTW…FVML), and 452-472 (YKSV…FLPI). Ser486 is modified (phosphoserine).

The protein belongs to the membrane-bound acyltransferase family. As to expression, highly expressed in stomach, epididymis, and colon.

The protein localises to the endoplasmic reticulum membrane. The enzyme catalyses a 1-acyl-sn-glycero-3-phosphoethanolamine + an acyl-CoA = a 1,2-diacyl-sn-glycero-3-phosphoethanolamine + CoA. The catalysed reaction is a 1-acyl-sn-glycero-3-phospho-L-serine + an acyl-CoA = a 1,2-diacyl-sn-glycero-3-phospho-L-serine + CoA. It carries out the reaction a 1-acyl-sn-glycero-3-phosphocholine + an acyl-CoA = a 1,2-diacyl-sn-glycero-3-phosphocholine + CoA. It catalyses the reaction a 1-O-(1Z-alkenyl)-sn-glycero-3-phosphoethanolamine + (9Z)-octadecenoyl-CoA = 1-O-(1Z)-alkenyl-2-(9Z)-octadecenoyl-sn-glycero-3-phosphoethanolamine + CoA. The enzyme catalyses 1-octadecanoyl-sn-glycero-3-phosphoethanolamine + (9Z)-octadecenoyl-CoA = 1-octadecanoyl-2-(9Z-octadecenoyl)-sn-glycero-3-phosphoethanolamine + CoA. The catalysed reaction is 1-(9Z-octadecenoyl)-sn-glycero-3-phospho-L-serine + (9Z)-octadecenoyl-CoA = 1,2-di-(9Z)-octadecenoyl-sn-glycero-3-phospho-L-serine + CoA. It carries out the reaction 1-(9Z-octadecenoyl)-sn-glycero-3-phosphoethanolamine + (9Z)-octadecenoyl-CoA = 1,2-di-(9Z-octadecenoyl)-sn-glycero-3-phosphoethanolamine + CoA. It catalyses the reaction 1-hexadecanoyl-sn-glycero-3-phosphoethanolamine + (9Z)-octadecenoyl-CoA = 1-hexadecanoyl-2-(9Z-octadecenoyl)-sn-glycero-3-phosphoethanolamine + CoA. The enzyme catalyses 1-(10Z-heptadecenoyl)-sn-glycero-3-phosphoethanolamine + hexadecanoyl-CoA = 1-(10Z-heptadecenoyl)-2-hexadecanoyl-sn-glycero-3-phosphoethanolamine + CoA. The catalysed reaction is 1-(9Z-octadecenoyl)-sn-glycero-3-phospho-L-serine + octadecanoyl-CoA = 1-(9Z-octadecenoyl)-2-octadecanoyl-sn-glycero-3-phospho-L-serine + CoA. It carries out the reaction 1-(9Z-octadecenoyl)-sn-glycero-3-phospho-L-serine + (9Z)-hexadecenoyl-CoA = 1-(9Z-octadecenoyl)-2-(9Z-hexadecenoyl)-sn-glycero-3-phospho-L-serine + CoA. It catalyses the reaction 1-(9Z-octadecenoyl)-sn-glycero-3-phospho-L-serine + (9Z,12Z)-octadecadienoyl-CoA = 1-(9Z-octadecenoyl)-2-(9Z,12Z-octadienoyl)-sn-glycero-3-phospho-L-serine + CoA. The enzyme catalyses 1-hexadecanoyl-sn-glycero-3-phosphocholine + (9Z)-octadecenoyl-CoA = 1-hexadecanoyl-2-(9Z-octadecenoyl)-sn-glycero-3-phosphocholine + CoA. The catalysed reaction is 1-(10Z-heptadecenoyl)-sn-glycero-3-phosphoethanolamine + (9Z)-octadecenoyl-CoA = 1-(10Z-heptadecenoyl)-2-(9Z-octadecenoyl)-sn-glycero-3-phosphoethanolamine + CoA. Its pathway is lipid metabolism; phospholipid metabolism. Its function is as follows. Acyltransferase which catalyzes the transfer of an acyl group from an acyl-CoA towards a lysophospholipid producing a phospholipid and participates in the reacylation step of the phospholipid remodeling pathway also known as the Lands cycle. Acts on lysophosphatidylserine (1-acyl-2-hydroxy-sn-glycero-3-phospho-L-serine or LPS) and lysophosphatidylethanolamine (1-acyl-sn-glycero-3-phosphoethanolamine or LPE), and to a lesser extend lysophosphatidylcholine. Prefers oleoyl-CoA as the acyl donor and 1-oleoyl-LPE as acceptor. May play a role in neurite outgrowth during neuronal differentiation. This is Membrane-bound glycerophospholipid O-acyltransferase 1 from Mus musculus (Mouse).